The chain runs to 139 residues: Large ribosomal subunit protein uL16 (139 aa).

This sequence belongs to the universal ribosomal protein uL16 family. As to quaternary structure, part of the 50S ribosomal subunit.

Its function is as follows. Binds 23S rRNA and is also seen to make contacts with the A and possibly P site tRNAs. This Chlorobium phaeobacteroides (strain BS1) protein is Large ribosomal subunit protein uL16.